The sequence spans 526 residues: Inosine-5'-monophosphate dehydrogenase (526 aa).

2 consecutive CBS domains span residues 120-179 (FIQD…EDPV) and 183-239 (MATD…PLAS). NAD(+)-binding positions include 276 to 278 (DSS) and 326 to 328 (GMG). Positions 328 and 330 each coordinate K(+). Residue Ser331 participates in IMP binding. Cys333 contacts K(+). The active-site Thioimidate intermediate is the Cys333. IMP contacts are provided by residues 366-368 (DGG) and 389-390 (GS). Arg439 acts as the Proton acceptor in catalysis. Residue Gln451 participates in IMP binding. Ser506 is a binding site for K(+). The tract at residues 506–526 (SAQTEGNVHGLHTHEKKLYSS) is disordered. A compositionally biased stretch (basic and acidic residues) spans 517–526 (HTHEKKLYSS).

The protein belongs to the IMPDH/GMPR family. As to quaternary structure, homotetramer. It depends on K(+) as a cofactor.

It is found in the cytoplasm. The catalysed reaction is IMP + NAD(+) + H2O = XMP + NADH + H(+). The protein operates within secondary metabolite biosynthesis; terpenoid biosynthesis. With respect to regulation, mycophenolic acid (MPA) is a non-competitive inhibitor that prevents formation of the closed enzyme conformation by binding to the same site as the amobile flap. In contrast, mizoribine monophosphate (MZP) is a competitive inhibitor that induces the closed conformation. MPA is a potent inhibitor of mammalian IMPDHs but a poor inhibitor of the bacterial enzymes. MZP is a more potent inhibitor of bacterial IMPDH. Catalyzes the conversion of inosine 5'-phosphate (IMP) to xanthosine 5'-phosphate (XMP), the first committed and rate-limiting step in the de novo synthesis of guanine nucleotides, and therefore plays an important role in the regulation of cell growth. Part of the gene cluster that mediates the biosynthesis of mycophenolic acid (MPA), the first isolated antibiotic natural product in the world. Does not play a role in the biosynthesis of MPA, but is involved in self resistance to MPA, since MPA acts as an inhibitor of IMP dehydrogenases. In Penicillium roqueforti (strain FM164), this protein is Inosine-5'-monophosphate dehydrogenase.